A 326-amino-acid polypeptide reads, in one-letter code: Light-induced protein, chloroplastic (326 aa).

Residues 1–63 (MASISSLNQI…TNPKPKFTAQ (63 aa)) constitute a chloroplast transit peptide.

The protein belongs to the LIPC family. As to quaternary structure, associates with the major light-harvesting antenna complex polypeptides of the PSII oxygen-evolving complex. Expressed in leaves.

It localises to the plastid. Its subcellular location is the chloroplast thylakoid membrane. Required for normal plant growth. May be both photoprotective and play an ancillary role in photosynthesis. May structurally stabilize thylakoids during osmotic and oxidative stress. The protein is Light-induced protein, chloroplastic of Solanum tuberosum (Potato).